The primary structure comprises 86 residues: Small ribosomal subunit protein bS20 (86 aa).

Positions 1–27 (MANSKSAKKRAIQAEKRRQHNASRRSM) are disordered.

Belongs to the bacterial ribosomal protein bS20 family.

Its function is as follows. Binds directly to 16S ribosomal RNA. The sequence is that of Small ribosomal subunit protein bS20 from Vibrio atlanticus (strain LGP32) (Vibrio splendidus (strain Mel32)).